A 271-amino-acid chain; its full sequence is 3-methyl-2-oxobutanoate hydroxymethyltransferase (271 aa).

2 residues coordinate Mg(2+): D51 and D90. Residues 51 to 52 (DS), D90, and K118 each bind 3-methyl-2-oxobutanoate. E120 contacts Mg(2+). Residue E186 is the Proton acceptor of the active site.

The protein belongs to the PanB family. Homodecamer; pentamer of dimers. Mg(2+) is required as a cofactor.

It is found in the cytoplasm. The catalysed reaction is 3-methyl-2-oxobutanoate + (6R)-5,10-methylene-5,6,7,8-tetrahydrofolate + H2O = 2-dehydropantoate + (6S)-5,6,7,8-tetrahydrofolate. The protein operates within cofactor biosynthesis; (R)-pantothenate biosynthesis; (R)-pantoate from 3-methyl-2-oxobutanoate: step 1/2. Functionally, catalyzes the reversible reaction in which hydroxymethyl group from 5,10-methylenetetrahydrofolate is transferred onto alpha-ketoisovalerate to form ketopantoate. The polypeptide is 3-methyl-2-oxobutanoate hydroxymethyltransferase (Xanthomonas campestris pv. campestris (strain 8004)).